The sequence spans 307 residues: Taste receptor type 2 member 41 (307 aa).

Residues 1–7 lie on the Extracellular side of the membrane; it reads MQAALMA. A helical transmembrane segment spans residues 8–28; that stretch reads FFMLLFSLLSLLGIAANGFIV. At 29–40 the chain is on the cytoplasmic side; that stretch reads LVLGREWLRYGR. The chain crosses the membrane as a helical span at residues 41–61; sequence LLPLDMILISLGASRXCLQLV. At 62 to 88 the chain is on the extracellular side; the sequence is GTVHNFYYSARKVEYSGGLGRQFFHLH. The helical transmembrane segment at 89–109 threads the bilayer; that stretch reads WHFLNSATFWFCSWLSVLFCV. Over 110-129 the chain is Cytoplasmic; it reads KIANITHPTFLWLKWRFPGW. The helical transmembrane segment at 130–150 threads the bilayer; that stretch reads VPWLLLGSVLISFIITLLFFW. Over 151 to 183 the chain is Extracellular; that stretch reads VNYPVYQELLIRKFSGNMTYKWNTRIETYYFPS. Asn-167 carries an N-linked (GlcNAc...) asparagine glycan. Residues 184–204 form a helical membrane-spanning segment; that stretch reads LKLVIWSIPFSVFLVSIMLLI. The Cytoplasmic segment spans residues 205 to 234; sequence NSLRRHTQRMQHNGHSLQDPSTQAHTRALK. Residues 235–255 form a helical membrane-spanning segment; it reads SLISFLFLYALSFLSLIIDAT. Over 256 to 264 the chain is Extracellular; sequence KFISMQNDF. A helical membrane pass occupies residues 265–285; sequence YWPWQIAVYLCISVHPFILIF. Over 286–307 the chain is Cytoplasmic; that stretch reads SNLKLRSMFWQVLLLARGFWVA.

This sequence belongs to the G-protein coupled receptor T2R family.

Its subcellular location is the membrane. Its function is as follows. Receptor that may play a role in the perception of bitterness and is gustducin-linked. May play a role in sensing the chemical composition of the gastrointestinal content. The activity of this receptor may stimulate alpha gustducin, mediate PLC-beta-2 activation and lead to the gating of TRPM5. The protein is Taste receptor type 2 member 41 (TAS2R41) of Gorilla gorilla gorilla (Western lowland gorilla).